A 725-amino-acid chain; its full sequence is Ribonuclease R (725 aa).

Residues 264–592 (RQDLTDLAFV…IHRLLWMHLF (329 aa)) enclose the RNB domain. An S1 motif domain is found at 644 to 725 (GKTFSGFISA…IQKRAILTLI (82 aa)).

The protein belongs to the RNR ribonuclease family. RNase R subfamily.

The protein resides in the cytoplasm. It catalyses the reaction Exonucleolytic cleavage in the 3'- to 5'-direction to yield nucleoside 5'-phosphates.. 3'-5' exoribonuclease that releases 5'-nucleoside monophosphates and is involved in maturation of structured RNAs. The polypeptide is Ribonuclease R (Mycoplasma genitalium (strain ATCC 33530 / DSM 19775 / NCTC 10195 / G37) (Mycoplasmoides genitalium)).